The chain runs to 194 residues: dITP/XTP pyrophosphatase (194 aa).

A substrate-binding site is contributed by 11-16; sequence SHNAGK. The active-site Proton acceptor is Asp70. Asp70 is a Mg(2+) binding site. Residues Ser71, 149–152, Lys172, and 177–178 each bind substrate; these read FGYD and HR.

The protein belongs to the HAM1 NTPase family. In terms of assembly, homodimer. The cofactor is Mg(2+).

The catalysed reaction is XTP + H2O = XMP + diphosphate + H(+). It catalyses the reaction dITP + H2O = dIMP + diphosphate + H(+). It carries out the reaction ITP + H2O = IMP + diphosphate + H(+). In terms of biological role, pyrophosphatase that catalyzes the hydrolysis of nucleoside triphosphates to their monophosphate derivatives, with a high preference for the non-canonical purine nucleotides XTP (xanthosine triphosphate), dITP (deoxyinosine triphosphate) and ITP. Seems to function as a house-cleaning enzyme that removes non-canonical purine nucleotides from the nucleotide pool, thus preventing their incorporation into DNA/RNA and avoiding chromosomal lesions. The polypeptide is dITP/XTP pyrophosphatase (Thermosynechococcus vestitus (strain NIES-2133 / IAM M-273 / BP-1)).